Here is a 69-residue protein sequence, read N- to C-terminus: Peptide Hact-1 (69 aa).

The N-terminal stretch at 1 to 21 (MDRKFHLCLLLVILGTIIVQG) is a signal peptide. Positions 22–57 (APLENENDADPDKPQKYRYYLKRATTEKKDNDPAKP) are excised as a propeptide. C59 and C68 are oxidised to a cystine.

In terms of tissue distribution, tentacle (ecto and/or endoderm tissue), and possibly also nematoblasts.

It is found in the secreted. It localises to the nematocyst. Peptide with unknown function. Has a limited effect on human peripheral blood mononuclear cells. Does not show activity against both Gram-positive and Gram-negative bacteria nor is it active on the 26 voltage-gated ion channels tested. The protein is Peptide Hact-1 of Heliofungia actiniformis (Mushroom coral).